The following is an 875-amino-acid chain: Phosphatidylinositol 3-kinase VPS34 (875 aa).

The region spanning 14 to 188 (LDVPLKVKIK…WLDEITISKL (175 aa)) is the C2 PI3K-type domain. In terms of domain architecture, PIK helical spans 293 to 526 (LDKQVKPDIK…SSFWSRLDKK (234 aa)). The 267-residue stretch at 593 to 859 (CPETSKVFKS…LINDSVNALL (267 aa)) folds into the PI3K/PI4K catalytic domain. The G-loop stretch occupies residues 599–605 (VFKSSLS). Positions 728–736 (GVGDRHLDN) are catalytic loop. Residues 747 to 768 (HADFGYILGQDPKPFPPLMKLP) form an activation loop region.

The protein belongs to the PI3/PI4-kinase family. As to quaternary structure, component of the autophagy-specific VPS34 PI3-kinase complex I composed of VPS15, VPS30, VPS34, ATG14 and ATG38, and of the VPS34 PI3-kinase complex II composed of VPS15, VPS30, VPS34 and VPS38. Interacts directly with ATG38. Interacts directly with VPS34. Post-translationally, autophosphorylated. Might also be phosphorylated by VPS15.

The protein localises to the golgi apparatus. It is found in the trans-Golgi network membrane. It localises to the endosome membrane. The catalysed reaction is a 1,2-diacyl-sn-glycero-3-phospho-(1D-myo-inositol) + ATP = a 1,2-diacyl-sn-glycero-3-phospho-(1D-myo-inositol-3-phosphate) + ADP + H(+). Phosphatidylinositol 3-kinase activity is directly dependent on VPS15 protein kinase activity. Its function is as follows. Phosphatidylinositol 3-kinase required for cytoplasm to vacuole transport (Cvt) and autophagy as a part of the autophagy-specific VPS34 PI3-kinase complex I. This complex is essential to recruit the ATG8-phosphatidylinositol conjugate and the ATG12-ATG5 conjugate to the pre-autophagosomal structure. Also involved in endosome-to-Golgi retrograde transport as part of the VPS34 PI3-kinase complex II. This second complex is required for the endosome-to-Golgi retrieval of PEP1 and KEX2, and the recruitment of VPS5 and VPS7, two components of the retromer complex, to endosomal membranes (probably through the synthesis of a specific pool of phosphatidylinositol 3-phosphate recruiting the retromer to the endosomes). Its activation by VPS15 may lead to the phosphorylation of phosphatidylinositol in the sorting compartment membrane. Finally, it might also be involved in ethanol tolerance and cell wall integrity. The sequence is that of Phosphatidylinositol 3-kinase VPS34 (VPS34) from Saccharomyces cerevisiae (strain ATCC 204508 / S288c) (Baker's yeast).